The sequence spans 317 residues: Transaldolase (317 aa).

Residue lysine 132 is the Schiff-base intermediate with substrate of the active site.

It belongs to the transaldolase family. Type 1 subfamily. Homodimer.

It is found in the cytoplasm. It carries out the reaction D-sedoheptulose 7-phosphate + D-glyceraldehyde 3-phosphate = D-erythrose 4-phosphate + beta-D-fructose 6-phosphate. It functions in the pathway carbohydrate degradation; pentose phosphate pathway; D-glyceraldehyde 3-phosphate and beta-D-fructose 6-phosphate from D-ribose 5-phosphate and D-xylulose 5-phosphate (non-oxidative stage): step 2/3. Its function is as follows. Transaldolase is important for the balance of metabolites in the pentose-phosphate pathway. This chain is Transaldolase, found in Shewanella denitrificans (strain OS217 / ATCC BAA-1090 / DSM 15013).